Here is a 726-residue protein sequence, read N- to C-terminus: Putative tyrosine-protein kinase AmsA (726 aa).

Transmembrane regions (helical) follow at residues 32-52 and 425-445; these read WMIVAVSVLFTLMGTLYSLFA and ILIVAGSLILGLVVSVGLVLM.

Belongs to the etk/wzc family.

The protein resides in the cell inner membrane. The catalysed reaction is L-tyrosyl-[protein] + ATP = O-phospho-L-tyrosyl-[protein] + ADP + H(+). It functions in the pathway glycan metabolism; exopolysaccharide biosynthesis. Involved in the biosynthesis of amylovoran which functions as a virulence factor. In Erwinia amylovora (Fire blight bacteria), this protein is Putative tyrosine-protein kinase AmsA (amsA).